The primary structure comprises 529 residues: Ectonucleoside triphosphate diphosphohydrolase 3 (529 aa).

The Cytoplasmic segment spans residues 1–22 (MFTVLTRQPCEQAGLKALYRTP). A helical transmembrane segment spans residues 23–43 (TIIALVVLLVSIVVLVSITVI). Topologically, residues 44-485 (QIHKQEVLPP…PLIRLPIEPP (442 aa)) are extracellular. N-linked (GlcNAc...) asparagine glycosylation occurs at N81. The cysteines at positions 92 and 116 are disulfide-linked. N149 is a glycosylation site (N-linked (GlcNAc...) asparagine). E182 serves as the catalytic Proton acceptor. 222–226 (GASTQ) contacts ATP. N238 carries an N-linked (GlcNAc...) asparagine glycan. 3 disulfide bridges follow: C261/C308, C289/C334, and C347/C353. N-linked (GlcNAc...) asparagine glycans are attached at residues N381, N392, N402, and N454. An intrachain disulfide couples C399 to C422. Residues 486 to 506 (VFVGTLAFFTAAALLCLAFLA) traverse the membrane as a helical segment. Residues 507 to 529 (YLCSATRRKRHSEHAFDHAVDSD) are Cytoplasmic-facing.

It belongs to the GDA1/CD39 NTPase family. Ca(2+) serves as cofactor. Mg(2+) is required as a cofactor. Expressed in adult brain, pancreas, spleen and prostate. Moderate or low expression is seen in most tissues. Not expressed in liver and peripheral blood leukocytes.

The protein localises to the cell membrane. The catalysed reaction is a ribonucleoside 5'-triphosphate + 2 H2O = a ribonucleoside 5'-phosphate + 2 phosphate + 2 H(+). Its function is as follows. Has a threefold preference for the hydrolysis of ATP over ADP. This is Ectonucleoside triphosphate diphosphohydrolase 3 (ENTPD3) from Homo sapiens (Human).